The primary structure comprises 319 residues: Beta-ketoacyl-[acyl-carrier-protein] synthase III (319 aa).

Residues C113 and H246 contribute to the active site. The segment at 247 to 251 (QANIR) is ACP-binding. The active site involves N276.

This sequence belongs to the thiolase-like superfamily. FabH family. Homodimer.

Its subcellular location is the cytoplasm. It catalyses the reaction malonyl-[ACP] + acetyl-CoA + H(+) = 3-oxobutanoyl-[ACP] + CO2 + CoA. It participates in lipid metabolism; fatty acid biosynthesis. Its function is as follows. Catalyzes the condensation reaction of fatty acid synthesis by the addition to an acyl acceptor of two carbons from malonyl-ACP. Catalyzes the first condensation reaction which initiates fatty acid synthesis and may therefore play a role in governing the total rate of fatty acid production. Possesses both acetoacetyl-ACP synthase and acetyl transacylase activities. Its substrate specificity determines the biosynthesis of branched-chain and/or straight-chain of fatty acids. The polypeptide is Beta-ketoacyl-[acyl-carrier-protein] synthase III (Ehrlichia ruminantium (strain Gardel)).